The primary structure comprises 321 residues: MRIGHYQLRNRLIAAPMAGITDRPFRTLCYEMGAGLTVSEMMSSNPQVWESDKSRLRMVHVDEPGIRTVQIAGSVPKEMAAAARINVESGAQIIDINMGCPAKKVNRKLAGSALLQYPDQVKSILTAVVKAVDVPVTLKIRTGWEPEHRNCVEIAQLAEECGIQALTIHGRTRACLFNGDAEYDSIRAVKQKVSIPVIANGDITDPLKARAVLDYTGADALMIGRAAQGRPWIFREIQHYLDTGELLPPLPLAEVKRLLCAHVRELHGFYGQAKGYRIARKHVSWYLQEHAPDDQFRRTFNAIEDSSEQLEALEAYFENFA.

Residues 16-18 (PMA) and Gln-70 each bind FMN. Catalysis depends on Cys-100, which acts as the Proton donor. FMN-binding positions include Lys-139, 200–202 (NGD), and 224–225 (GR).

This sequence belongs to the Dus family. DusB subfamily. The cofactor is FMN.

It catalyses the reaction a 5,6-dihydrouridine in tRNA + NAD(+) = a uridine in tRNA + NADH + H(+). The enzyme catalyses a 5,6-dihydrouridine in tRNA + NADP(+) = a uridine in tRNA + NADPH + H(+). In terms of biological role, catalyzes the synthesis of 5,6-dihydrouridine (D), a modified base found in the D-loop of most tRNAs, via the reduction of the C5-C6 double bond in target uridines. This chain is tRNA-dihydrouridine synthase B, found in Klebsiella pneumoniae.